The chain runs to 320 residues: Mycothiol acetyltransferase (320 aa).

2 consecutive N-acetyltransferase domains span residues 8-141 and 152-320; these read SHLT…RSLR and LQIR…AALA. A 1D-myo-inositol 2-(L-cysteinylamino)-2-deoxy-alpha-D-glucopyranoside-binding site is contributed by Glu36. Acetyl-CoA is bound by residues 80 to 82 and 88 to 93; these read LVV and RRGIAT. 3 residues coordinate 1D-myo-inositol 2-(L-cysteinylamino)-2-deoxy-alpha-D-glucopyranoside: Glu179, Lys229, and Glu239. Acetyl-CoA contacts are provided by residues 243 to 245 and 250 to 256; these read LGV and QGRGLGR. Tyr284 provides a ligand contact to 1D-myo-inositol 2-(L-cysteinylamino)-2-deoxy-alpha-D-glucopyranoside. 289-294 serves as a coordination point for acetyl-CoA; that stretch reads NIAAVR.

It belongs to the acetyltransferase family. MshD subfamily. As to quaternary structure, monomer.

The enzyme catalyses 1D-myo-inositol 2-(L-cysteinylamino)-2-deoxy-alpha-D-glucopyranoside + acetyl-CoA = mycothiol + CoA + H(+). In terms of biological role, catalyzes the transfer of acetyl from acetyl-CoA to desacetylmycothiol (Cys-GlcN-Ins) to form mycothiol. The polypeptide is Mycothiol acetyltransferase (Mycobacterium ulcerans (strain Agy99)).